The following is a 208-amino-acid chain: Coat protein (208 aa).

It belongs to the potexvirus capsid protein family.

Its subcellular location is the virion. Required for genome encapsidation. Forms ribonucleoprotein complexes along with TGB1 helicase and viral RNA. The polypeptide is Coat protein (Trifolium (WCMV)).